The chain runs to 42 residues: Potassium channel toxin gamma-KTx 1.6 (42 aa).

Cystine bridges form between cysteine 5–cysteine 23, cysteine 11–cysteine 34, cysteine 20–cysteine 39, and cysteine 24–cysteine 41.

It belongs to the ergtoxin family. Gamma-KTx 1 subfamily. In terms of tissue distribution, expressed by the venom gland.

It is found in the secreted. Its function is as follows. Blocks Kv11/ERG potassium channels. This Centruroides exilicauda (Bark scorpion) protein is Potassium channel toxin gamma-KTx 1.6.